A 216-amino-acid chain; its full sequence is Twisted gastrulation protein homolog 1-A (216 aa).

A signal peptide spans 1–25 (MKPSFLHIPAAALLLCSLWILPIYC). N-linked (GlcNAc...) asparagine glycosylation is found at N52, N81, and N145.

The protein belongs to the twisted gastrulation protein family. In terms of assembly, binds directly to bmp2, bmp4 and bmp7 and can form a ternary complex with bmps and chordin, thus preventing the binding of bmps to their cell surface receptors. Posterior defects are induced by overexpression. This may arise through alteration of bmp4 or chrd function in the developing tailbud region.

The protein resides in the secreted. Involved in dorsal-ventral patterning, permitting peak BMP signaling by antagonizing the residual anti-BMP activity of the cleavage products of chrd. Functions to promote the formation of ventral mesoderm by increasing the activity of bmp7 and other BMPS. Seems to antagonize BMP signaling by forming ternary complexes with chrd and BMPs, thereby preventing BMPs from binding to their receptors. In addition to the anti-BMP function, also has pro-BMP activity, partly mediated by cleavage and degradation of chrd, which releases BMPs from ternary complexes. May be an important modulator of BMP-regulated cartilage development and chondrocyte differentiation. This Xenopus laevis (African clawed frog) protein is Twisted gastrulation protein homolog 1-A (twsg1-a).